A 338-amino-acid polypeptide reads, in one-letter code: Phytanoyl-CoA dioxygenase, peroxisomal (338 aa).

The transit peptide at 1–30 (MDYTRAGARLQVLLGHLGRPSALQIVAHPV) directs the protein to the peroxisome. Residues Lys59 and Lys108 each carry the N6-succinyllysine modification. 2-oxoglutarate is bound by residues Lys120, Met157, 175-177 (HQD), and Trp193. Residues His175 and Asp177 each contribute to the Fe cation site. Residues Lys231 and Lys252 each carry the N6-succinyllysine modification. Position 264 (His264) interacts with Fe cation. Residues Ser266 and Arg275 each contribute to the 2-oxoglutarate site.

Belongs to the PhyH family. In terms of assembly, interacts specifically with FKBP52 and PHYHIP. Fe cation is required as a cofactor. Requires L-ascorbate as cofactor. ATP serves as cofactor. The cofactor is Mg(2+).

Its subcellular location is the peroxisome. It catalyses the reaction phytanoyl-CoA + 2-oxoglutarate + O2 = 2-hydroxyphytanoyl-CoA + succinate + CO2. It carries out the reaction 3-methylhexadecanoyl-CoA + 2-oxoglutarate + O2 = 2-hydroxy-3-methylhexadecanoyl-CoA + succinate + CO2. The enzyme catalyses hexadecanoyl-CoA + 2-oxoglutarate + O2 = 2-hydroxyhexadecanoyl-CoA + succinate + CO2. The catalysed reaction is octanoyl-CoA + 2-oxoglutarate + O2 = 2-hydroxyoctanoyl-CoA + succinate + CO2. It catalyses the reaction decanoyl-CoA + 2-oxoglutarate + O2 = 2-hydroxydecanoyl-CoA + succinate + CO2. It carries out the reaction 3-methylbutanoyl-CoA + 2-oxoglutarate + O2 = 2-hydroxy-3-methylbutanoyl-CoA + succinate + CO2. The enzyme catalyses heptadecanoyl-CoA + 2-oxoglutarate + O2 = 2-hydroxyheptadecanoyl-CoA + succinate + CO2. The catalysed reaction is eicosanoyl-CoA + 2-oxoglutarate + O2 = 2-hydroxyeicosanoyl-CoA + succinate + CO2. It catalyses the reaction octadecanoyl-CoA + 2-oxoglutarate + O2 = 2-hydroxyoctadecanoyl-CoA + succinate + CO2. It carries out the reaction dodecanoyl-CoA + 2-oxoglutarate + O2 = 2-hydroxydodecanoyl-CoA + succinate + CO2. The enzyme catalyses tetradecanoyl-CoA + 2-oxoglutarate + O2 = 2-hydroxytetradecanoyl-CoA + succinate + CO2. The catalysed reaction is hexanoyl-CoA + 2-oxoglutarate + O2 = 2-hydroxyhexanoyl-CoA + succinate + CO2. It catalyses the reaction butanoyl-CoA + 2-oxoglutarate + O2 = 2-hydroxybutanoyl-CoA + succinate + CO2. It carries out the reaction 3-methylnonanoyl-CoA + 2-oxoglutarate + O2 = 2-hydroxy-3-methylnonanoyl-CoA + succinate + CO2. The enzyme catalyses 3-methylundecanoyl-CoA + 2-oxoglutarate + O2 = 2-hydroxy-3-methylundecanoyl-CoA + succinate + CO2. The catalysed reaction is 3-methyldodecanoyl-CoA + 2-oxoglutarate + O2 = 2-hydroxy-3-methyldodecanoyl-CoA + succinate + CO2. The protein operates within lipid metabolism; fatty acid metabolism. Its function is as follows. Catalyzes the 2-hydroxylation of racemic phytanoyl-CoA and the isomers of 3-methylhexadecanoyl-CoA. Shows activity also towards a variety of other mono-branched 3-methylacyl-CoA esters (with a chain length of at least seven carbon atoms) and straight-chain acyl-CoA esters (with a chain length longer than four carbon atoms). Does not hydroxylate long and very long straight chain acyl-CoAs or 2-methyl-and 4-methyl-branched acyl-CoAs. This is Phytanoyl-CoA dioxygenase, peroxisomal (Phyh) from Rattus norvegicus (Rat).